The primary structure comprises 364 residues: Phosphate acyltransferase (364 aa).

The segment at 343–364 is disordered; sequence IRTSGRSGGKSKSSAAREDGAA.

Belongs to the PlsX family. In terms of assembly, homodimer. Probably interacts with PlsY.

The protein localises to the cytoplasm. The enzyme catalyses a fatty acyl-[ACP] + phosphate = an acyl phosphate + holo-[ACP]. It functions in the pathway lipid metabolism; phospholipid metabolism. Catalyzes the reversible formation of acyl-phosphate (acyl-PO(4)) from acyl-[acyl-carrier-protein] (acyl-ACP). This enzyme utilizes acyl-ACP as fatty acyl donor, but not acyl-CoA. This is Phosphate acyltransferase from Novosphingobium aromaticivorans (strain ATCC 700278 / DSM 12444 / CCUG 56034 / CIP 105152 / NBRC 16084 / F199).